The sequence spans 44 residues: Photosystem I reaction center subunit IX (44 aa).

The chain crosses the membrane as a helical span at residues 9-29 (FVRSAPVVAAIWLSLTAGIII).

The protein belongs to the PsaJ family.

It is found in the cellular thylakoid membrane. In terms of biological role, may help in the organization of the PsaE and PsaF subunits. The protein is Photosystem I reaction center subunit IX of Prochlorococcus marinus (strain MIT 9301).